The chain runs to 142 residues: Large ribosomal subunit protein uL11 (142 aa).

Belongs to the universal ribosomal protein uL11 family. As to quaternary structure, part of the ribosomal stalk of the 50S ribosomal subunit. Interacts with L10 and the large rRNA to form the base of the stalk. L10 forms an elongated spine to which L12 dimers bind in a sequential fashion forming a multimeric L10(L12)X complex. Post-translationally, one or more lysine residues are methylated.

In terms of biological role, forms part of the ribosomal stalk which helps the ribosome interact with GTP-bound translation factors. In Shewanella loihica (strain ATCC BAA-1088 / PV-4), this protein is Large ribosomal subunit protein uL11.